Reading from the N-terminus, the 549-residue chain is Alpha-amylase (549 aa).

The first 34 residues, 1 to 34 (MLTFHRIIRKGWMFLLAFLLTALLFCPTGQPAKA), serve as a signal peptide directing secretion. Aspartate 139, aspartate 196, alanine 218, aspartate 220, aspartate 231, and aspartate 237 together coordinate Ca(2+). Aspartate 196 lines the Na(+) pocket. Residues aspartate 220, aspartate 231, aspartate 237, and leucine 238 each coordinate Na(+). Aspartate 239 provides a ligand contact to Ca(2+). Aspartate 268 (nucleophile) is an active-site residue. Residue histidine 272 participates in Ca(2+) binding. Catalysis depends on glutamate 298, which acts as the Proton donor. Positions 337, 339, 440, 441, and 464 each coordinate Ca(2+).

Belongs to the glycosyl hydrolase 13 family. In terms of assembly, monomer. The cofactor is Ca(2+). Requires Na(+) as cofactor.

It is found in the secreted. It catalyses the reaction Endohydrolysis of (1-&gt;4)-alpha-D-glucosidic linkages in polysaccharides containing three or more (1-&gt;4)-alpha-linked D-glucose units.. In Geobacillus stearothermophilus (Bacillus stearothermophilus), this protein is Alpha-amylase (amyS).